A 353-amino-acid chain; its full sequence is Mitochondrial distribution and morphology protein 10 (353 aa).

This sequence belongs to the MDM10 family. Component of the ER-mitochondria encounter structure (ERMES) or MDM complex, composed of MMM1, MDM10, MDM12 and MDM34. Associates with the mitochondrial outer membrane sorting assembly machinery SAM(core) complex.

The protein resides in the mitochondrion outer membrane. Its function is as follows. Component of the ERMES/MDM complex, which serves as a molecular tether to connect the endoplasmic reticulum and mitochondria. Components of this complex are involved in the control of mitochondrial shape and protein biogenesis and may function in phospholipid exchange. MDM10 is involved in the late assembly steps of the general translocase of the mitochondrial outer membrane (TOM complex). Functions in the TOM40-specific route of the assembly of outer membrane beta-barrel proteins, including the association of TOM40 with the receptor TOM22 and small TOM proteins. Can associate with the SAM(core) complex as well as the MDM12-MMM1 complex, both involved in late steps of the major beta-barrel assembly pathway, that is responsible for biogenesis of all outer membrane beta-barrel proteins. May act as a switch that shuttles between both complexes and channels precursor proteins into the TOM40-specific pathway. Plays a role in mitochondrial morphology and in the inheritance of mitochondria. This is Mitochondrial distribution and morphology protein 10 from Yarrowia lipolytica (strain CLIB 122 / E 150) (Yeast).